The primary structure comprises 712 residues: Diacylglycerol kinase 2 (712 aa).

Phorbol-ester/DAG-type zinc fingers lie at residues 72–133 (HHQW…AKDC) and 145–208 (RHHW…GDAC). Residues 338–479 (PDARPLLVFI…RWSVKIVEES (142 aa)) form the DAGKc domain.

The protein belongs to the eukaryotic diacylglycerol kinase family. Monomer. Expressed in rosette and cauline leaves, flowers, siliques and roots. Highly expressed in young leaves and at lower levels in older leaves. In young seedlings, expressed at the root-shoot junction zone and vascular bundles of the cotyledons. In older plants, expressed in root tip, central cylinder, root hair, leaf mesophyll cells and guard cells, sepals, filaments of the anthers, stigma, valves of young and early adult siliques and hilum of seeds.

It localises to the endoplasmic reticulum. It catalyses the reaction a 1,2-diacyl-sn-glycerol + ATP = a 1,2-diacyl-sn-glycero-3-phosphate + ADP + H(+). The enzyme catalyses 1-octadecanoyl-2-(5Z,8Z,11Z,14Z-eicosatetraenoyl)-sn-glycerol + ATP = 1-octadecanoyl-2-(5Z,8Z,11Z,14Z-eicosatetraenoyl)-sn-glycero-3-phosphate + ADP + H(+). The catalysed reaction is 1,2-di-(9Z-octadecenoyl)-sn-glycerol + ATP = 1,2-di-(9Z-octadecenoyl)-sn-glycero-3-phosphate + ADP + H(+). Its function is as follows. Phosphorylates the second messenger diacylglycerol (DAG) to generate phosphatidic acid (PA), another important signaling molecule. PA is required for plant development and responses to abiotic stress and pathogen attack. May be involved in the accumulation of PA during cold stress. Involved in response to freezing stress by modulating the accumulation of PA. Exhibits high specificity for the unsaturated DAG analogs 1-stearoyl-2-arachidonoyl-sn-glycerol (1,2-SAG) and 1,2-dioleoyl-sn-glycerol (1,2-DOG). Exhibits high specificity for 1-palmitoyl, 2-oleoyl-sn-glycerol (1,2 POG), 1-stearoyl, 2-linoleoyl-sn-glycerol (1,2-SLG) and 1-oleoyl, 2-palmitoyl-sn-glycerol (1,2-OPG). Has almost no activity toward 1,2-dioctanoyl-sn-glycerol (1,2-DOCG), 1,2-dipalmitoyl-sn-glycerol (1,2-DPG), 1,2-dimyristoyl-sn-glycerol (1,2-DMG) and 1-oleoyl-2-acetyl-sn-glycerol (1,2-OAG). Functions together with DGK4 in male gametophyte development and biosynthesis of phosphatidylglycerol and phosphatidylinositol in the endoplasmic reticulum (ER). Involved in PA production for pollen grain growth, as well as leaf and root growth. This chain is Diacylglycerol kinase 2, found in Arabidopsis thaliana (Mouse-ear cress).